The sequence spans 94 residues: Small ribosomal subunit protein uS19 (94 aa).

The protein belongs to the universal ribosomal protein uS19 family.

In terms of biological role, protein S19 forms a complex with S13 that binds strongly to the 16S ribosomal RNA. The polypeptide is Small ribosomal subunit protein uS19 (Wolbachia pipientis subsp. Culex pipiens (strain wPip)).